A 78-amino-acid polypeptide reads, in one-letter code: Small ribosomal subunit protein bS16c (78 aa).

It belongs to the bacterial ribosomal protein bS16 family.

The protein resides in the plastid. It localises to the chloroplast. This is Small ribosomal subunit protein bS16c from Panax ginseng (Korean ginseng).